The primary structure comprises 340 residues: UPF0324 membrane protein BC_5174 (340 aa).

Transmembrane regions (helical) follow at residues 13-35 (FGFS…LAEL), 40-59 (IMGQ…AAIG), 99-118 (VLVI…YGLT), 128-150 (GILT…APQV), 157-179 (TAVG…TLLY), 189-211 (YGVF…APGG), 218-240 (AVIV…GLWF), 255-277 (LPIP…GIIP), 279-301 (VVAG…GLGL), and 316-338 (FVAG…YALG).

Belongs to the UPF0324 family.

The protein localises to the cell membrane. The chain is UPF0324 membrane protein BC_5174 from Bacillus cereus (strain ATCC 14579 / DSM 31 / CCUG 7414 / JCM 2152 / NBRC 15305 / NCIMB 9373 / NCTC 2599 / NRRL B-3711).